A 362-amino-acid polypeptide reads, in one-letter code: 3-dehydroquinate synthase (362 aa).

Residues 71-76 (DGEQYK), 105-109 (GVIGD), 129-130 (TT), Lys-142, Lys-151, and 169-172 (CLKT) each bind NAD(+). 3 residues coordinate Zn(2+): Glu-184, His-247, and His-264.

It belongs to the sugar phosphate cyclases superfamily. Dehydroquinate synthase family. The cofactor is Co(2+). Zn(2+) serves as cofactor. NAD(+) is required as a cofactor.

The protein resides in the cytoplasm. The enzyme catalyses 7-phospho-2-dehydro-3-deoxy-D-arabino-heptonate = 3-dehydroquinate + phosphate. The protein operates within metabolic intermediate biosynthesis; chorismate biosynthesis; chorismate from D-erythrose 4-phosphate and phosphoenolpyruvate: step 2/7. Its function is as follows. Catalyzes the conversion of 3-deoxy-D-arabino-heptulosonate 7-phosphate (DAHP) to dehydroquinate (DHQ). This Salmonella enteritidis PT4 (strain P125109) protein is 3-dehydroquinate synthase.